The sequence spans 357 residues: Isopentenyl-diphosphate delta-isomerase (357 aa).

13–14 provides a ligand contact to substrate; that stretch reads RK. Residues Ser-71, 72–74, Ser-102, and Asn-131 each bind FMN; that span reads SMT. Residue 102-104 coordinates substrate; the sequence is SMR. Gln-166 provides a ligand contact to substrate. Glu-167 is a binding site for Mg(2+). FMN contacts are provided by residues Lys-198 and 311–312; that span reads AR.

Belongs to the IPP isomerase type 2 family. In terms of assembly, homooctamer. Dimer of tetramers. The cofactor is FMN. Requires NADPH as cofactor. Mg(2+) serves as cofactor.

Its subcellular location is the cytoplasm. The enzyme catalyses isopentenyl diphosphate = dimethylallyl diphosphate. Functionally, involved in the biosynthesis of isoprenoids. Catalyzes the 1,3-allylic rearrangement of the homoallylic substrate isopentenyl (IPP) to its allylic isomer, dimethylallyl diphosphate (DMAPP). This is Isopentenyl-diphosphate delta-isomerase from Chlorobium chlorochromatii (strain CaD3).